The chain runs to 460 residues: uncharacterized protein (460 aa).

A TRAM domain is found at 5-63; that stretch reads TWHQGELIEVAIADLSDTGDGVGRFAERVVFVPDTVPGDRVLVRLLHVKPNYAHGKLHQ. [4Fe-4S] cluster contacts are provided by C76, C82, C85, and C164. Residues Q288, Y317, E338, and D383 each contribute to the S-adenosyl-L-methionine site. Catalysis depends on C410, which acts as the Nucleophile.

It belongs to the class I-like SAM-binding methyltransferase superfamily. RNA M5U methyltransferase family.

This is an uncharacterized protein from Nostoc sp. (strain PCC 7120 / SAG 25.82 / UTEX 2576).